A 285-amino-acid chain; its full sequence is Complex I assembly factor TIMMDC1, mitochondrial (285 aa).

4 helical membrane passes run 80–100, 137–159, 165–185, and 188–208; these read AAVS…FIYA, RWSW…LTVY, MSHF…NLGV, and LVAG…LLMA. The segment at 265-285 is disordered; sequence RIEELLSLPRNPSSPHQQSKH. Over residues 274–285 the composition is skewed to polar residues; the sequence is RNPSSPHQQSKH. Ser-277 is modified (phosphoserine).

The protein belongs to the Tim17/Tim22/Tim23 family. In terms of assembly, associates with the intermediate 315 kDa subcomplex of incompletely assembled complex I. Interacts with TMEM70.

It localises to the mitochondrion membrane. Chaperone protein involved in the assembly of the mitochondrial NADH:ubiquinone oxidoreductase complex (complex I). Participates in constructing the membrane arm of complex I. The sequence is that of Complex I assembly factor TIMMDC1, mitochondrial from Mus musculus (Mouse).